The following is a 158-amino-acid chain: Tryptophan-rich protein TspO (158 aa).

The next 5 membrane-spanning stretches (helical) occupy residues isoleucine 5 to phenylalanine 25, leucine 48 to leucine 68, valine 79 to phenylalanine 99, leucine 105 to phenylalanine 125, and leucine 134 to leucine 154.

Belongs to the TspO/BZRP family.

The protein localises to the membrane. It localises to the cell membrane. Binds tetrapyrroles and promotes the photooxidative degradation of protoporphyrin IX. Can bind the benzodiazepine receptor agonist PK-11195 (in vitro); this interferes with photooxidative tetrapyrrole degradation. May play a role in the transmembrane transport of tetrapyrroles and similar compounds. This chain is Tryptophan-rich protein TspO, found in Chlorobaculum tepidum (strain ATCC 49652 / DSM 12025 / NBRC 103806 / TLS) (Chlorobium tepidum).